The chain runs to 226 residues: Exosome complex component Rrp4 (226 aa).

The S1 motif domain maps to 61-135 (NDLVIGKVNS…RDPLVSISDR (75 aa)). Residues 141-200 (DSGVLMEISPSKVPRLIGKKGSMIQMIEEATDAAVTIGQNGWVVVSCESPEGLLKAKKAI) form the KH domain.

The protein belongs to the RRP4 family. Component of the archaeal exosome complex. Forms a trimer of Rrp4 and/or Csl4 subunits. The trimer associates with a hexameric ring-like arrangement composed of 3 Rrp41-Rrp42 heterodimers.

It is found in the cytoplasm. In terms of biological role, non-catalytic component of the exosome, which is a complex involved in RNA degradation. Increases the RNA binding and the efficiency of RNA degradation. Confers strong poly(A) specificity to the exosome. This chain is Exosome complex component Rrp4, found in Nitrosopumilus maritimus (strain SCM1).